A 252-amino-acid polypeptide reads, in one-letter code: Imidazole glycerol phosphate synthase subunit HisF (252 aa).

Residues D11 and D130 contribute to the active site.

The protein belongs to the HisA/HisF family. In terms of assembly, heterodimer of HisH and HisF.

It is found in the cytoplasm. The catalysed reaction is 5-[(5-phospho-1-deoxy-D-ribulos-1-ylimino)methylamino]-1-(5-phospho-beta-D-ribosyl)imidazole-4-carboxamide + L-glutamine = D-erythro-1-(imidazol-4-yl)glycerol 3-phosphate + 5-amino-1-(5-phospho-beta-D-ribosyl)imidazole-4-carboxamide + L-glutamate + H(+). Its pathway is amino-acid biosynthesis; L-histidine biosynthesis; L-histidine from 5-phospho-alpha-D-ribose 1-diphosphate: step 5/9. In terms of biological role, IGPS catalyzes the conversion of PRFAR and glutamine to IGP, AICAR and glutamate. The HisF subunit catalyzes the cyclization activity that produces IGP and AICAR from PRFAR using the ammonia provided by the HisH subunit. This is Imidazole glycerol phosphate synthase subunit HisF from Syntrophomonas wolfei subsp. wolfei (strain DSM 2245B / Goettingen).